Here is a 1404-residue protein sequence, read N- to C-terminus: DNA-directed RNA polymerase subunit beta' (1404 aa).

Residues cysteine 60, cysteine 62, cysteine 75, and cysteine 78 each contribute to the Zn(2+) site. Residues aspartate 449, aspartate 451, and aspartate 453 each contribute to the Mg(2+) site. Residues cysteine 778, cysteine 852, cysteine 859, and cysteine 862 each contribute to the Zn(2+) site. The tract at residues aspartate 1381–glutamate 1404 is disordered. Over residues leucine 1384 to glutamate 1404 the composition is skewed to acidic residues.

The protein belongs to the RNA polymerase beta' chain family. As to quaternary structure, the RNAP catalytic core consists of 2 alpha, 1 beta, 1 beta' and 1 omega subunit. When a sigma factor is associated with the core the holoenzyme is formed, which can initiate transcription. It depends on Mg(2+) as a cofactor. Requires Zn(2+) as cofactor.

It catalyses the reaction RNA(n) + a ribonucleoside 5'-triphosphate = RNA(n+1) + diphosphate. Its function is as follows. DNA-dependent RNA polymerase catalyzes the transcription of DNA into RNA using the four ribonucleoside triphosphates as substrates. The chain is DNA-directed RNA polymerase subunit beta' from Leptospira borgpetersenii serovar Hardjo-bovis (strain L550).